The sequence spans 290 residues: ATP synthase gamma chain (290 aa).

The protein belongs to the ATPase gamma chain family. As to quaternary structure, F-type ATPases have 2 components, CF(1) - the catalytic core - and CF(0) - the membrane proton channel. CF(1) has five subunits: alpha(3), beta(3), gamma(1), delta(1), epsilon(1). CF(0) has three main subunits: a, b and c.

It localises to the cell inner membrane. In terms of biological role, produces ATP from ADP in the presence of a proton gradient across the membrane. The gamma chain is believed to be important in regulating ATPase activity and the flow of protons through the CF(0) complex. This chain is ATP synthase gamma chain, found in Dinoroseobacter shibae (strain DSM 16493 / NCIMB 14021 / DFL 12).